The primary structure comprises 147 residues: Hemoglobin subunit beta (147 aa).

Position 2 is an N-acetylvaline (V2). A Globin domain is found at 3 to 147; that stretch reads HLTGEEKAAV…VANALAHKYH (145 aa). T13 carries the phosphothreonine modification. At S45 the chain carries Phosphoserine. K60 carries the N6-acetyllysine modification. H64 contacts heme b. K83 is modified (N6-acetyllysine). A heme b-binding site is contributed by H93. The residue at position 94 (C94) is an S-nitrosocysteine. K145 is modified (N6-acetyllysine).

It belongs to the globin family. Heterotetramer of two alpha chains and two beta chains. Red blood cells.

Involved in oxygen transport from the lung to the various peripheral tissues. This chain is Hemoglobin subunit beta (HBB), found in Cheracebus torquatus (Collared titi monkey).